The chain runs to 353 residues: Ferredoxin--NADP reductase (353 aa).

FAD is bound by residues Thr25, Glu44, Gln52, Tyr57, Val97, Phe132, Asp298, and Ser339.

The protein belongs to the ferredoxin--NADP reductase type 2 family. In terms of assembly, homodimer. Requires FAD as cofactor.

The catalysed reaction is 2 reduced [2Fe-2S]-[ferredoxin] + NADP(+) + H(+) = 2 oxidized [2Fe-2S]-[ferredoxin] + NADPH. This chain is Ferredoxin--NADP reductase, found in Chlorobium phaeovibrioides (strain DSM 265 / 1930) (Prosthecochloris vibrioformis (strain DSM 265)).